The following is a 98-amino-acid chain: NADH-ubiquinone oxidoreductase chain 4L (98 aa).

3 consecutive transmembrane segments (helical) span residues 1-21 (MSMV…GMLV), 29-49 (SLLC…VTIL), and 61-81 (IVLL…LVMV).

The protein belongs to the complex I subunit 4L family. Core subunit of respiratory chain NADH dehydrogenase (Complex I) which is composed of 45 different subunits.

The protein localises to the mitochondrion inner membrane. It catalyses the reaction a ubiquinone + NADH + 5 H(+)(in) = a ubiquinol + NAD(+) + 4 H(+)(out). Functionally, core subunit of the mitochondrial membrane respiratory chain NADH dehydrogenase (Complex I) which catalyzes electron transfer from NADH through the respiratory chain, using ubiquinone as an electron acceptor. Part of the enzyme membrane arm which is embedded in the lipid bilayer and involved in proton translocation. The sequence is that of NADH-ubiquinone oxidoreductase chain 4L (MT-ND4L) from Vulpes vulpes (Red fox).